A 399-amino-acid chain; its full sequence is Argininosuccinate synthase (399 aa).

9 to 17 is an ATP binding site; it reads AYSGGLDTS. Tyr87 lines the L-citrulline pocket. Gly117 is a binding site for ATP. The L-aspartate site is built by Thr119, Asn123, and Asp124. Asn123 provides a ligand contact to L-citrulline. Arg127, Ser176, Ser185, Glu261, and Tyr273 together coordinate L-citrulline.

It belongs to the argininosuccinate synthase family. Type 1 subfamily. As to quaternary structure, homotetramer.

The protein resides in the cytoplasm. The catalysed reaction is L-citrulline + L-aspartate + ATP = 2-(N(omega)-L-arginino)succinate + AMP + diphosphate + H(+). It functions in the pathway amino-acid biosynthesis; L-arginine biosynthesis; L-arginine from L-ornithine and carbamoyl phosphate: step 2/3. The sequence is that of Argininosuccinate synthase from Chlorobium chlorochromatii (strain CaD3).